A 342-amino-acid polypeptide reads, in one-letter code: Ferredoxin--NADP reductase (342 aa).

C17, D36, Q44, Y49, V89, F124, D289, and T330 together coordinate FAD.

It belongs to the ferredoxin--NADP reductase type 2 family. In terms of assembly, homodimer. FAD serves as cofactor.

The enzyme catalyses 2 reduced [2Fe-2S]-[ferredoxin] + NADP(+) + H(+) = 2 oxidized [2Fe-2S]-[ferredoxin] + NADPH. The chain is Ferredoxin--NADP reductase from Rhodopseudomonas palustris (strain ATCC BAA-98 / CGA009).